The following is a 1240-amino-acid chain: RNA2 polyprotein (1240 aa).

Residues 1193-1210 show a composition bias toward polar residues; the sequence is VGTTVPPTADASTSNSQG. Residues 1193 to 1240 are disordered; that stretch reads VGTTVPPTADASTSNSQGGDEDIGDQYSAALGRGRGRGSRPGPSPIRG.

This sequence belongs to the nepoviruses RNA2 polyprotein family. Specific enzymatic cleavages in vivo by the P1 encoded 3C-like protease yield mature proteins.

It is found in the host cell junction. The protein localises to the host plasmodesma. The protein resides in the virion. Its function is as follows. Implicated in RNA2 replication. Could also be required for nematode transmission of the virus. In terms of biological role, transports viral genome to neighboring plant cells directly through plasmosdesmata, without any budding. The movement protein allows efficient cell to cell propagation, by bypassing the host cell wall barrier. Acts by forming a tubular structure at the host plasmodesmata, enlarging it enough to allow free passage of virion capsids. This is RNA2 polyprotein from Cycas necrotic stunt virus (CNSV).